A 312-amino-acid chain; its full sequence is 2-phosphoglycerate kinase (312 aa).

The ATP-cone domain occupies 8-95 (SRILVTDKEY…LWRRVLKKHS (88 aa)).

This sequence belongs to the 2-phosphoglycerate kinase family. A divalent metal cation is required as a cofactor.

It carries out the reaction (2R)-2-phosphoglycerate + ATP = (2R)-2,3-bisphosphoglycerate + ADP + H(+). It participates in thermoadapter biosynthesis; cyclic 2,3-diphosphoglycerate biosynthesis; cyclic 2,3-diphosphoglycerate from 2-phospho-D-glycerate: step 1/2. Functionally, catalyzes the phosphorylation of 2-phosphoglycerate to 2,3-diphosphoglycerate. Involved in the biosynthesis of cyclic 2,3-bisphosphoglycerate, a thermoprotectant. The sequence is that of 2-phosphoglycerate kinase from Methanococcus maripaludis (strain C7 / ATCC BAA-1331).